The following is a 317-amino-acid chain: HTH-type transcriptional regulator CfxR (317 aa).

The 58-residue stretch at 8-65 (LTLRQLQIFVTVARHASFVRAAEELHLTQPAVSMQVKQLESVVGMALFERVKGQLTLT) folds into the HTH lysR-type domain. Positions 25 to 44 (FVRAAEELHLTQPAVSMQVK) form a DNA-binding region, H-T-H motif.

The protein belongs to the LysR transcriptional regulatory family.

Functionally, trans-acting transcriptional regulator of RuBisCO genes (cfxLS) expression. The sequence is that of HTH-type transcriptional regulator CfxR (cfxR) from Cupriavidus necator (strain ATCC 17699 / DSM 428 / KCTC 22496 / NCIMB 10442 / H16 / Stanier 337) (Ralstonia eutropha).